The sequence spans 73 residues: Disintegrin mojastin-2 (73 aa).

In terms of domain architecture, Disintegrin spans 1-73; that stretch reads EAGEECDCGS…ADCPRNGLYG (73 aa). Cystine bridges form between Cys6–Cys21, Cys8–Cys16, Cys15–Cys38, Cys29–Cys35, Cys34–Cys59, and Cys47–Cys66. The Cell attachment site motif lies at 51–53; it reads RGD.

Belongs to the venom metalloproteinase (M12B) family. P-II subfamily. P-IIa sub-subfamily. As to quaternary structure, monomer (disintegrin). In terms of tissue distribution, expressed by the venom gland.

It localises to the secreted. In terms of biological role, inhibits the three processes involved in platelet function (adhesion, activation and aggregation). It inhibits platelet adhesion to fibronectin with an IC(50) of 58.6 nM. It inhibits ATP release from platelet induced by ADP with an IC(50) of 19.5 nM on platelet-rich plasma, probably by binding to ADP receptors (P2RY1 and P2RY12). Finally, it inhibits ADP-induced platelet aggregation with IC(50) of 44.7 nM on platelet-rich plasma and 19.3 nM on whole blood, probably by binding to alpha-IIb/beta-3 (ITGA2B/ITGB3). Functionally, inhibits ADP-induced platelet aggregation (IC(50) = 13.8 nM) probably by binding to alpha-IIb/beta-3 (ITGA2B/ITGB3) located on the platelet surface. The chain is Disintegrin mojastin-2 from Crotalus scutulatus scutulatus (Mojave rattlesnake).